The sequence spans 510 residues: DAP3-binding cell death enhancer 1 (510 aa).

Residues 1 to 23 (MWRLTGILGRALPRLLGPGFRGI) constitute a mitochondrion transit peptide. Disordered stretches follow at residues 19-61 (GFRG…SRDP) and 142-185 (VLPR…SGLL). A propeptide spans 24–101 (TPKPTSSDGS…AVLALHLARQ (78 aa)) (extended MTS). Over residues 35-45 (TTSPTLPLTRL) the composition is skewed to low complexity. Composition is skewed to basic and acidic residues over residues 46 to 61 (SFDR…SRDP) and 155 to 167 (GLRE…EDHP). Over residues 169 to 181 (APSQCLPSDSSLR) the composition is skewed to polar residues. 7 TPR repeats span residues 213-245 (AHPP…QLSV), 246-278 (AITF…RGYS), 279-313 (KAQY…VQGH), 314-351 (SLAQ…DSGL), 352-385 (TEAQ…SNGD), 386-423 (SQSR…GNEP), and 471-499 (ASST…TIPS). The SIFI-degron signature appears at 307–326 (LAAVQGHSLAQYRYARCLLQ).

It belongs to the DELE1 family. As to quaternary structure, interacts with DAP3. Interacts (via TPR repeats) with EIF2AK1/HRI; activating the protein kinase activity of EIF2AK1/HRI, thereby promoting the integrated stress response (ISR). In terms of assembly, homooctamer; oligomerization is required to activate EIF2AK1/HRI. Interacts (via TPR repeats) with EIF2AK1/HRI; activating the protein kinase activity of EIF2AK1/HRI, thereby promoting the integrated stress response (ISR). Post-translationally, unstable protein in absence of stress: imported in the mitochondrial matrix following processing by the mitochondrial-processing peptidase (MPP), where it is degraded by LONP1. Stabilized in response to iron deficiency: iron deficiency impairs mitochondrial import, promoting localization at the mitochondrial surface and stabilization. Cleaved by OMA1 in response to mitochondrial stress, generating the DAP3-binding cell death enhancer 1 short form (DELE1(S) or S-DELE1) that accumulates in the cytosol and activates the protein kinase activity of EIF2AK1/HRI. Protein cleavage by OMA1 can take place at different positions, and apparently does not require a specific sequence motif. In terms of processing, ubiquitinated and degraded by the SIFI complex once the mitochondrial stress has been resolved, thereby providing stress response silencing. Within the SIFI complex, UBR4 initiates ubiquitin chain that are further elongated or branched by KCMF1.

Its subcellular location is the mitochondrion. The protein resides in the mitochondrion outer membrane. It localises to the mitochondrion inner membrane. It is found in the cytoplasm. The protein localises to the cytosol. Protein kinase activator that acts as a key activator of the integrated stress response (ISR) following various stresses, such as iron deficiency, mitochondrial stress or mitochondrial DNA breaks. Detects impaired protein import and processing in mitochondria, activating the ISR. May also required for the induction of death receptor-mediated apoptosis through the regulation of caspase activation. Its function is as follows. Protein kinase activator that activates the ISR in response to iron deficiency: iron deficiency impairs mitochondrial import, promoting DELE1 localization at the mitochondrial surface, where it binds and activates EIF2AK1/HRI to trigger the ISR. In terms of biological role, protein kinase activator generated by protein cleavage in response to mitochondrial stress, which accumulates in the cytosol and specifically binds to and activates the protein kinase activity of EIF2AK1/HRI. It thereby activates the integrated stress response (ISR): EIF2AK1/HRI activation promotes eIF-2-alpha (EIF2S1) phosphorylation, leading to a decrease in global protein synthesis and the induction of selected genes, including the transcription factor ATF4, the master transcriptional regulator of the ISR. Also acts as an activator of PRKN-independent mitophagy: activates the protein kinase activity of EIF2AK1/HRI in response to mitochondrial damage, promoting eIF-2-alpha (EIF2S1) phosphorylation, leading to mitochondrial localization of EIF2S1 followed by induction of mitophagy. In Mus musculus (Mouse), this protein is DAP3-binding cell death enhancer 1.